Reading from the N-terminus, the 101-residue chain is MSEQTPRDDGEIFTLVDEAGNEELYKEAMRFQSPETGKWYICLYPLDEENDEEVGIQAFAFEEPTSEEDELELLPIENDAEWEMVQEVLNTFIDDDGNFNA.

Belongs to the UPF0473 family.

This is UPF0473 protein LAF_0524 from Limosilactobacillus fermentum (strain NBRC 3956 / LMG 18251) (Lactobacillus fermentum).